The sequence spans 199 residues: Probable molybdenum cofactor guanylyltransferase (199 aa).

Residues 8–10 (LAG), K20, D65, and D96 contribute to the GTP site. D96 is a binding site for Mg(2+).

The protein belongs to the MobA family. It depends on Mg(2+) as a cofactor.

The protein localises to the cytoplasm. It catalyses the reaction Mo-molybdopterin + GTP + H(+) = Mo-molybdopterin guanine dinucleotide + diphosphate. Functionally, transfers a GMP moiety from GTP to Mo-molybdopterin (Mo-MPT) cofactor (Moco or molybdenum cofactor) to form Mo-molybdopterin guanine dinucleotide (Mo-MGD) cofactor. The chain is Probable molybdenum cofactor guanylyltransferase from Bacillus subtilis (strain 168).